The chain runs to 334 residues: Succinate receptor 1 (334 aa).

Topologically, residues 5 to 31 (MAWNATCKNWLAAEAALEKYYLSIFYG) are extracellular. An N-linked (GlcNAc...) asparagine glycan is attached at Asn-8. Residues 32 to 52 (IEFVVGVLGNTIVVYGYIFSL) traverse the membrane as a helical segment. The Cytoplasmic portion of the chain corresponds to 53–59 (KNWNSSN). Residues 60 to 80 (IYLFNLSVSDLAFLCTLPMLI) traverse the membrane as a helical segment. At 81–103 (RSYANGNWIYGDVLCISNRYVLH) the chain is on the extracellular side. Cys-95 and Cys-172 are oxidised to a cystine. Residues 104–124 (ANLYTSILFLTFISIDRYLII) traverse the membrane as a helical segment. Residues 125–137 (KYPFREHLLQKKE) are Cytoplasmic-facing. A helical membrane pass occupies residues 138 to 158 (FAILISLAIWVLVTLELLPIL). Over 159 to 185 (PLINPVITDNGTTCNDFASSGDPNYNL) the chain is Extracellular. Asn-168 is a glycosylation site (N-linked (GlcNAc...) asparagine). The chain crosses the membrane as a helical span at residues 186–206 (IYSMCLTLLGFLIPLFVMCFF). Topologically, residues 207-230 (YYKIALFLKQRNRQVATALPLEKP) are cytoplasmic. A helical transmembrane segment spans residues 231 to 251 (LNLVIMAVVIFSVLFTPYHVM). Over 252–281 (RNVRIASRLGSWKQYQCTQVVINSFYIVTR) the chain is Extracellular. The helical transmembrane segment at 282 to 302 (PLAFLNSVINPVFYFLLGDHF) threads the bilayer. At 303–334 (RDMLMNQLRHNFKSLTSFSRWAHELLLSFREK) the chain is on the cytoplasmic side.

The protein belongs to the G-protein coupled receptor 1 family. As to expression, expressed specifically in kidney. Highly expressed in immature dendritic cells, expression rapidly downregulates after maturation. Also expressed in macrophages.

It localises to the cell membrane. In terms of biological role, g protein-coupled receptor for succinate able to mediate signaling through Gq/GNAQ or Gi/GNAI second messengers depending on the cell type and the processes regulated. Succinate-SUCNR1 signaling serves as a link between metabolic stress, inflammation and energy homeostasis. In macrophages, plays a range of immune-regulatory roles. During inflammation, succinate-SUCNR1 signaling may act as an anti-inflammatory mediator or boost inflammation depending on the inflammatory status of cells. Hyperpolarizes M2 macrophages versus M1 phenotype through Gq signaling by regulating the transcription of genes involved in immune function. In activated M1 macrophages, plays a pro-inflammatory role in response to LPS. Expressed in dendritic cells, where it is involved in the sensing of immunological danger and enhances immunity. Mediates succinate triggered intracelleular calcium mobilization, induces migratory responses and acts in synergy with Toll-like receptor ligands for the production of proinflammatory cytokines as well as an enhancement of antigen-specific activation of helper T cells. In the small intestine, mediates the activation of tuft cells by dietary succinate and triggers type 2 immunity. In adipocytes, plays an important role in the control of energy metabolism. In response to succinate, controls leptin expression in an AMPK-JNK-CEBPA-dependent as well as circadian clock-regulated manner. In muscle tissue, is expressed in non-muscle cells and coordinates muscle remodeling in response to the succinate produced during exercise training in a paracrine manner. In retina, acts as a mediator of vessel growth during retinal development. In response to succinate, regulates the production of angiogenic factors, including VEGF, by retinal ganglion neurons. The chain is Succinate receptor 1 from Homo sapiens (Human).